The chain runs to 320 residues: Cytochrome f (320 aa).

Residues 1–36 (MKHTNSKQKLKDIINFCQAIFTLCIICLYQANISNS) form the signal peptide. The heme site is built by tyrosine 37, cysteine 57, cysteine 60, and histidine 61. A helical transmembrane segment spans residues 286-305 (LISFIFFSISVLISQLFFVL).

The protein belongs to the cytochrome f family. The 4 large subunits of the cytochrome b6-f complex are cytochrome b6, subunit IV (17 kDa polypeptide, petD), cytochrome f and the Rieske protein, while the 4 small subunits are PetG, PetL, PetM and PetN. The complex functions as a dimer. Heme serves as cofactor.

The protein localises to the plastid. It localises to the chloroplast thylakoid membrane. Its function is as follows. Component of the cytochrome b6-f complex, which mediates electron transfer between photosystem II (PSII) and photosystem I (PSI), cyclic electron flow around PSI, and state transitions. The chain is Cytochrome f (petA) from Cyanidium caldarium (Red alga).